Reading from the N-terminus, the 226-residue chain is Orotate phosphoribosyltransferase (226 aa).

Residues Arg-107, Lys-108, Lys-111, and 133–141 contribute to the 5-phospho-alpha-D-ribose 1-diphosphate site; that span reads EDLTTDGGS. Thr-137 contacts orotate.

Belongs to the purine/pyrimidine phosphoribosyltransferase family. PyrE subfamily. In terms of assembly, homodimer. The cofactor is Mg(2+).

It carries out the reaction orotidine 5'-phosphate + diphosphate = orotate + 5-phospho-alpha-D-ribose 1-diphosphate. It participates in pyrimidine metabolism; UMP biosynthesis via de novo pathway; UMP from orotate: step 1/2. Functionally, catalyzes the transfer of a ribosyl phosphate group from 5-phosphoribose 1-diphosphate to orotate, leading to the formation of orotidine monophosphate (OMP). The protein is Orotate phosphoribosyltransferase of Dinoroseobacter shibae (strain DSM 16493 / NCIMB 14021 / DFL 12).